The following is a 436-amino-acid chain: MVNLESMHTDIKMSGDVADSTDARSTLSQVEPGNDRNGLDFNRQIKTEDLSDSLQQTLSHRPCHLSQGPAMMSGNQMSGLNASPCQDMASLHPLQQLVLVPGHLQSVSQFLLSQTQPGQQGLQPNLLPFPQQQSGLLLPQTGPGLASQAFGHPGLPGSSLEPHLEASQHLPVPKHLPSSGGADEPSDLEELEKFAKTFKQRRIKLGFTQGDVGLAMGKLYGNDFSQTTISRFEALNLSFKNMCKLKPLLEKWLNDAESSPSDPSVSTPSSYPSLSEVFGRKRKKRTSIETNIRLTLEKRFQDNPKPSSEEISMIAEQLSMEKEVVRVWFCNRRQKEKRINCPVATPIKPPVYNSRLVSPSGSLGPLSVPPVHSTMPGTVTSSCSPGNNSRPSSPGSGLHASSPTASQNNSKAAVNSASSFNSSGSWYRWNHSTYLH.

3 disordered regions span residues 1-40, 140-186, and 256-278; these read MVNL…NGLD, QTGP…DEPS, and AESS…SEVF. A POU-specific domain is found at 183–257; it reads DEPSDLEELE…LLEKWLNDAE (75 aa). The segment covering 258–275 has biased composition (low complexity); sequence SSPSDPSVSTPSSYPSLS. A DNA-binding region (homeobox) is located at residues 281-340; the sequence is KRKKRTSIETNIRLTLEKRFQDNPKPSSEEISMIAEQLSMEKEVVRVWFCNRRQKEKRIN. The disordered stretch occupies residues 363-421; it reads LGPLSVPPVHSTMPGTVTSSCSPGNNSRPSSPGSGLHASSPTASQNNSKAAVNSASSFN. Composition is skewed to low complexity over residues 381-397 and 405-421; these read SSCS…PGSG and ASQN…SSFN.

It belongs to the POU transcription factor family. Class-2 subfamily. In terms of assembly, interacts (via the POU domain) with POU2AF1 and POU2AF2 in a DNA-dependent manner; this interaction recruits POU2AF2 to chromatin and increases POU2F3 transactivation activity. Specifically expressed in epidermis and cultured keratinocytes.

It localises to the nucleus. Its function is as follows. Transcription factor that binds to the octamer motif (5'-ATTTGCAT-3') and regulates cell type-specific differentiation pathways. Involved in the regulation of keratinocytes differentiation. The POU2F3-POU2AF2/POU2AF3 complex drives the expression of tuft-cell-specific genes, a rare chemosensory cells that coordinate immune and neural functions within mucosal epithelial tissues. The protein is POU domain, class 2, transcription factor 3 of Homo sapiens (Human).